Here is a 571-residue protein sequence, read N- to C-terminus: MAINQYGVNFNGRRIVHPGAYGSIDDSAMVVTSDGSSNIPIVIGTADSGKSGEVLWYTGVEDARNELGGGDLPQALEMMFSPSPEGGGGASLVGVIVANKTVPATATIGGVKFTAAEYGEGGNKIQVKLEDGSIPGSKKFTAYKWDTQDLDTFDNIGSVMSVAYTGTAKVAVIDVVVTDGVATKIETKVGEDAENLTVDLQLDLTNERYSTIEAVAQYLNSVSDYSASYVTSMSLELESSKLDAITGQDIKTKSYLTALKGDLEFRISQYADLVDVEVTGEIVNFDNTYLSGGEKGTTPASWSDYLDLIKKQYSDILVVLTDSEAIHAEALAHVQQMENRKQRQMLFVGGGKGEAPERAIERASLLNSSRAVLAYPGIYHSSYYSGSRELPAYFTAAMIAGRVAGVSQSTPVTFNKFNLVSLGRDMLAGDPEIDQLITSGVCTLEKVKNGAIRLVQGITTYIGSNNTLLREISVRRTADLVATSVEQTLEDTFVGKKGVSTTVSSVETVVSDTLAEKVRTEDIIGYGDIKVTFKNTMIYVDYEVAVVEPMNYILVRSHFVPDTGQFTTEEV.

The protein belongs to the myoviridae tail sheath protein family. Homomultimer.

The protein localises to the virion. Its subcellular location is the host cytoplasm. Its function is as follows. Polymerizes as an extended structure around the baseplate-tail tube complex. During ejection, the sheath shifts to a contracted form, thereby making the inner tail tube protrude through the host cell envelope. The protein is Tail sheath protein of Bacillus subtilis (Bacteriophage SP01).